The primary structure comprises 113 residues: Hydrogenase maturation factor HypA (113 aa).

Residue H2 participates in Ni(2+) binding. Zn(2+)-binding residues include C73, C76, C89, and C92.

The protein belongs to the HypA/HybF family.

In terms of biological role, involved in the maturation of [NiFe] hydrogenases. Required for nickel insertion into the metal center of the hydrogenase. In Xanthobacter autotrophicus (strain ATCC BAA-1158 / Py2), this protein is Hydrogenase maturation factor HypA.